The sequence spans 259 residues: Imidazole glycerol phosphate synthase subunit HisF (259 aa).

Residues Asp11 and Asp130 contribute to the active site.

Belongs to the HisA/HisF family. In terms of assembly, heterodimer of HisH and HisF.

It localises to the cytoplasm. It catalyses the reaction 5-[(5-phospho-1-deoxy-D-ribulos-1-ylimino)methylamino]-1-(5-phospho-beta-D-ribosyl)imidazole-4-carboxamide + L-glutamine = D-erythro-1-(imidazol-4-yl)glycerol 3-phosphate + 5-amino-1-(5-phospho-beta-D-ribosyl)imidazole-4-carboxamide + L-glutamate + H(+). The protein operates within amino-acid biosynthesis; L-histidine biosynthesis; L-histidine from 5-phospho-alpha-D-ribose 1-diphosphate: step 5/9. In terms of biological role, IGPS catalyzes the conversion of PRFAR and glutamine to IGP, AICAR and glutamate. The HisF subunit catalyzes the cyclization activity that produces IGP and AICAR from PRFAR using the ammonia provided by the HisH subunit. This is Imidazole glycerol phosphate synthase subunit HisF from Oleidesulfovibrio alaskensis (strain ATCC BAA-1058 / DSM 17464 / G20) (Desulfovibrio alaskensis).